Here is a 76-residue protein sequence, read N- to C-terminus: ATP synthase subunit 9, mitochondrial (76 aa).

Transmembrane regions (helical) follow at residues 14-34 (ISTI…AALI) and 56-76 (ALSE…LFAV).

This sequence belongs to the ATPase C chain family. As to quaternary structure, F-type ATPases have 2 components, CF(1) - the catalytic core - and CF(0) - the membrane proton channel. CF(1) has five subunits: alpha(3), beta(3), gamma(1), delta(1), epsilon(1). CF(0) has three main subunits: a, b and c.

Its subcellular location is the mitochondrion membrane. In terms of biological role, mitochondrial membrane ATP synthase (F(1)F(0) ATP synthase or Complex V) produces ATP from ADP in the presence of a proton gradient across the membrane which is generated by electron transport complexes of the respiratory chain. F-type ATPases consist of two structural domains, F(1) - containing the extramembraneous catalytic core and F(0) - containing the membrane proton channel, linked together by a central stalk and a peripheral stalk. During catalysis, ATP synthesis in the catalytic domain of F(1) is coupled via a rotary mechanism of the central stalk subunits to proton translocation. Part of the complex F(0) domain. A homomeric c-ring of probably 10 subunits is part of the complex rotary element. The sequence is that of ATP synthase subunit 9, mitochondrial (ATP9) from Candida glabrata (strain ATCC 2001 / BCRC 20586 / JCM 3761 / NBRC 0622 / NRRL Y-65 / CBS 138) (Yeast).